The following is a 328-amino-acid chain: Flap endonuclease 1 (328 aa).

Residues M1 to K98 are N-domain. D27, D80, E152, E154, D173, D175, and D227 together coordinate Mg(2+). The interval A116 to G248 is I-domain. The segment at A320 to F328 is interaction with PCNA.

This sequence belongs to the XPG/RAD2 endonuclease family. FEN1 subfamily. As to quaternary structure, interacts with PCNA. PCNA stimulates the nuclease activity without altering cleavage specificity. Mg(2+) serves as cofactor.

Its function is as follows. Structure-specific nuclease with 5'-flap endonuclease and 5'-3' exonuclease activities involved in DNA replication and repair. During DNA replication, cleaves the 5'-overhanging flap structure that is generated by displacement synthesis when DNA polymerase encounters the 5'-end of a downstream Okazaki fragment. Binds the unpaired 3'-DNA end and kinks the DNA to facilitate 5' cleavage specificity. Cleaves one nucleotide into the double-stranded DNA from the junction in flap DNA, leaving a nick for ligation. Also involved in the base excision repair (BER) pathway. Acts as a genome stabilization factor that prevents flaps from equilibrating into structures that lead to duplications and deletions. Also possesses 5'-3' exonuclease activity on nicked or gapped double-stranded DNA. This is Flap endonuclease 1 from Methanosphaera stadtmanae (strain ATCC 43021 / DSM 3091 / JCM 11832 / MCB-3).